Here is an 88-residue protein sequence, read N- to C-terminus: HssA/B-like protein 6 (88 aa).

The segment at methionine 1–alanine 22 is disordered.

Belongs to the hssA/B family.

This chain is HssA/B-like protein 6 (hssl6), found in Dictyostelium discoideum (Social amoeba).